Here is a 248-residue protein sequence, read N- to C-terminus: PF03932 family protein CutC (248 aa).

It belongs to the CutC family. As to quaternary structure, homodimer.

It is found in the cytoplasm. The protein is PF03932 family protein CutC of Escherichia coli O17:K52:H18 (strain UMN026 / ExPEC).